The sequence spans 469 residues: Interstitial collagenase (469 aa).

The signal sequence occupies residues 1–18; sequence MLSLPLLLLLLWGMGSHS. The propeptide at 19–99 is activation peptide; the sequence is FPTVPSETRE…PRCGVPDVAE (81 aa). The Cysteine switch signature appears at 90-97; it reads PRCGVPDV. Cys-92 contacts Zn(2+). Asp-124 and Asp-158 together coordinate Ca(2+). The Zn(2+) site is built by His-168 and Asp-170. The Ca(2+) site is built by Asp-175, Gly-176, Gly-178, and Asn-180. His-183 serves as a coordination point for Zn(2+). Residues Arg-190, Gly-192, and Asp-194 each contribute to the Ca(2+) site. His-196 contributes to the Zn(2+) binding site. Ca(2+) is bound by residues Asp-198, Glu-199, and Glu-201. Position 218 (His-218) interacts with Zn(2+). Glu-219 is a catalytic residue. Residues His-222 and His-228 each contribute to the Zn(2+) site. Thr-274 carries the phosphothreonine modification. 4 Hemopexin repeats span residues 275 to 324, 325 to 371, 374 to 422, and 423 to 466; these read PEVC…WPQL, PNGL…FGFP, VKNI…FPGI, and GDKV…WFNC. A disulfide bridge connects residues Cys-278 and Cys-466. Ca(2+) is bound by residues Asp-285 and Gln-329. Tyr-360 carries the post-translational modification Phosphotyrosine; by PKDCC. Positions 378 and 427 each coordinate Ca(2+).

Belongs to the peptidase M10A family. Requires Ca(2+) as cofactor. Zn(2+) is required as a cofactor. Tyrosine phosphorylated in platelets by PKDCC/VLK.

It localises to the secreted. The protein localises to the extracellular space. Its subcellular location is the extracellular matrix. The enzyme catalyses Cleavage of the triple helix of collagen at about three-quarters of the length of the molecule from the N-terminus, at 775-Gly-|-Ile-776 in the alpha1(I) chain. Cleaves synthetic substrates and alpha-macroglobulins at bonds where P1' is a hydrophobic residue.. With respect to regulation, can be activated without removal of the activation peptide. Its function is as follows. Cleaves collagens of types I, II, and III at one site in the helical domain. Also cleaves collagens of types VII and X. In Equus caballus (Horse), this protein is Interstitial collagenase (MMP1).